Consider the following 162-residue polypeptide: Large ribosomal subunit protein bL17 (162 aa).

The segment at Ala126–Glu162 is disordered. Residues Lys130–Lys139 are compositionally biased toward basic residues. Low complexity predominate over residues Ser140–Glu153.

It belongs to the bacterial ribosomal protein bL17 family. As to quaternary structure, part of the 50S ribosomal subunit. Contacts protein L32.

This is Large ribosomal subunit protein bL17 from Phocaeicola vulgatus (strain ATCC 8482 / DSM 1447 / JCM 5826 / CCUG 4940 / NBRC 14291 / NCTC 11154) (Bacteroides vulgatus).